The sequence spans 158 residues: Frataxin homolog, mitochondrial (158 aa).

It belongs to the frataxin family. In terms of assembly, monomer. Oligomer.

The protein resides in the mitochondrion. It catalyses the reaction 4 Fe(2+) + O2 + 4 H(+) = 4 Fe(3+) + 2 H2O. Its function is as follows. Promotes the biosynthesis of heme as well as the assembly and repair of iron-sulfur clusters by delivering Fe(2+) to proteins involved in these pathways. May play a role in the protection against iron-catalyzed oxidative stress through its ability to catalyze the oxidation of Fe(2+) to Fe(3+). May be able to store large amounts of the metal in the form of a ferrihydrite mineral by oligomerization. The polypeptide is Frataxin homolog, mitochondrial (Schizosaccharomyces pombe (strain 972 / ATCC 24843) (Fission yeast)).